We begin with the raw amino-acid sequence, 209 residues long: Ribosomal RNA large subunit methyltransferase E (209 aa).

S-adenosyl-L-methionine is bound by residues Gly63, Trp65, Asp83, Asp99, and Asp124. Residue Lys164 is the Proton acceptor of the active site.

The protein belongs to the class I-like SAM-binding methyltransferase superfamily. RNA methyltransferase RlmE family.

It localises to the cytoplasm. It carries out the reaction uridine(2552) in 23S rRNA + S-adenosyl-L-methionine = 2'-O-methyluridine(2552) in 23S rRNA + S-adenosyl-L-homocysteine + H(+). Specifically methylates the uridine in position 2552 of 23S rRNA at the 2'-O position of the ribose in the fully assembled 50S ribosomal subunit. The polypeptide is Ribosomal RNA large subunit methyltransferase E (Aeromonas hydrophila subsp. hydrophila (strain ATCC 7966 / DSM 30187 / BCRC 13018 / CCUG 14551 / JCM 1027 / KCTC 2358 / NCIMB 9240 / NCTC 8049)).